The chain runs to 185 residues: Large ribosomal subunit protein bL25 (185 aa).

Belongs to the bacterial ribosomal protein bL25 family. CTC subfamily. In terms of assembly, part of the 50S ribosomal subunit; part of the 5S rRNA/L5/L18/L25 subcomplex. Contacts the 5S rRNA. Binds to the 5S rRNA independently of L5 and L18.

This is one of the proteins that binds to the 5S RNA in the ribosome where it forms part of the central protuberance. The sequence is that of Large ribosomal subunit protein bL25 from Microcystis aeruginosa (strain NIES-843 / IAM M-2473).